A 548-amino-acid chain; its full sequence is MVQDRKVLDALDTAKTQWYHFTAVVIAGMGFFTDAYDLFSISLVTKLLGRIYYFNPASKSPGSLPPNVSAAVNGVAFCGTLAGQLFFGWLGDKMGRKKVYGMTLMLMVICCLASGLSFGSSAKGVMATLCFFRFWLGFGIGGDYPLSATIMSEYANKRTRGAFIAAVFAMQGFGNLTGGIVAIIVSAAFKLRFDAPAYRDDRAGSTVPQADYAWRIVLMFGAIPALLTYYWRMKMPETARYTALVAKNDKKAAADMARVLNVELVDEQEKAAAATAAAAEEEAARREQYGLFSREFARRHGHHLLGTTVCWFVLDIAYYSQNLFQKDIYTAVQWLPKADTMSALEEMFKISRAQTLVALCGTIPGYWFTVLFIDIVGRFAIQLGGFFLMTAFMLGLAVPYHHWTTPGNHVGFVVMYAFTFFFANFGPNSTTFIVPAEIFPARLRSTCHGISSAAGKMGAIVGSFGFLYAAQSTDPSKTDAGYPRGIGVRNSLFLLAGCNVVGFLFTFLVPESKGKSLEELSGENEMEAEPAAATNSYRQTVPDSGQSE.

The Cytoplasmic portion of the chain corresponds to 1 to 23 (MVQDRKVLDALDTAKTQWYHFTA). The chain crosses the membrane as a helical span at residues 24–44 (VVIAGMGFFTDAYDLFSISLV). Residues 45-69 (TKLLGRIYYFNPASKSPGSLPPNVS) lie on the Extracellular side of the membrane. Residues 70–90 (AAVNGVAFCGTLAGQLFFGWL) form a helical membrane-spanning segment. Residues 91–98 (GDKMGRKK) lie on the Cytoplasmic side of the membrane. The helical transmembrane segment at 99-119 (VYGMTLMLMVICCLASGLSFG) threads the bilayer. At 120 to 123 (SSAK) the chain is on the extracellular side. Residues 124–144 (GVMATLCFFRFWLGFGIGGDY) form a helical membrane-spanning segment. At 145–163 (PLSATIMSEYANKRTRGAF) the chain is on the cytoplasmic side. Residues 164–184 (IAAVFAMQGFGNLTGGIVAII) form a helical membrane-spanning segment. At 185–210 (VSAAFKLRFDAPAYRDDRAGSTVPQA) the chain is on the extracellular side. A helical membrane pass occupies residues 211 to 231 (DYAWRIVLMFGAIPALLTYYW). Topologically, residues 232 to 303 (RMKMPETARY…REFARRHGHH (72 aa)) are cytoplasmic. The chain crosses the membrane as a helical span at residues 304 to 324 (LLGTTVCWFVLDIAYYSQNLF). The Extracellular portion of the chain corresponds to 325–355 (QKDIYTAVQWLPKADTMSALEEMFKISRAQT). A helical transmembrane segment spans residues 356-376 (LVALCGTIPGYWFTVLFIDIV). Residues 377 to 378 (GR) lie on the Cytoplasmic side of the membrane. The chain crosses the membrane as a helical span at residues 379–399 (FAIQLGGFFLMTAFMLGLAVP). The Extracellular portion of the chain corresponds to 400 to 405 (YHHWTT). Residues 406–426 (PGNHVGFVVMYAFTFFFANFG) form a helical membrane-spanning segment. Residues 427–449 (PNSTTFIVPAEIFPARLRSTCHG) lie on the Cytoplasmic side of the membrane. A helical membrane pass occupies residues 450–470 (ISSAAGKMGAIVGSFGFLYAA). Topologically, residues 471–490 (QSTDPSKTDAGYPRGIGVRN) are extracellular. The helical transmembrane segment at 491-511 (SLFLLAGCNVVGFLFTFLVPE) threads the bilayer. Over 512-548 (SKGKSLEELSGENEMEAEPAAATNSYRQTVPDSGQSE) the chain is Cytoplasmic. Residues 518–548 (EELSGENEMEAEPAAATNSYRQTVPDSGQSE) form a disordered region. Over residues 533–548 (ATNSYRQTVPDSGQSE) the composition is skewed to polar residues.

Belongs to the major facilitator superfamily. Phosphate:H(+) symporter (TC 2.A.1.9) family. Expressed at low levels in roots.

Its subcellular location is the membrane. High-affinity transporter for external inorganic phosphate. In Oryza sativa subsp. japonica (Rice), this protein is Probable inorganic phosphate transporter 1-5 (PHT1-5).